Reading from the N-terminus, the 361-residue chain is DNA replication and repair protein RecF (361 aa).

30 to 37 contributes to the ATP binding site; sequence GPNGSGKT.

Belongs to the RecF family.

Its subcellular location is the cytoplasm. The RecF protein is involved in DNA metabolism; it is required for DNA replication and normal SOS inducibility. RecF binds preferentially to single-stranded, linear DNA. It also seems to bind ATP. The chain is DNA replication and repair protein RecF from Yersinia pseudotuberculosis serotype IB (strain PB1/+).